The chain runs to 179 residues: Translationally-controlled tumor protein homolog (179 aa).

The 179-residue stretch at 1 to 179 folds into the TCTP domain; it reads MIIYKDIISG…WKHGLEEMKV (179 aa).

The protein belongs to the TCTP family.

It is found in the cytoplasm. It localises to the cytoskeleton. Its function is as follows. Involved in protein synthesis. Involved in microtubule stabilization. Involved in osmoadaptation. The protein is Translationally-controlled tumor protein homolog of Emericella nidulans (strain FGSC A4 / ATCC 38163 / CBS 112.46 / NRRL 194 / M139) (Aspergillus nidulans).